We begin with the raw amino-acid sequence, 409 residues long: tRNA(Met) cytidine acetate ligase (409 aa).

Residues 7 to 20 (VVEY…HLYH), G102, N169, and R194 each bind ATP.

It belongs to the TmcAL family.

The protein localises to the cytoplasm. The catalysed reaction is cytidine(34) in elongator tRNA(Met) + acetate + ATP = N(4)-acetylcytidine(34) in elongator tRNA(Met) + AMP + diphosphate. In terms of biological role, catalyzes the formation of N(4)-acetylcytidine (ac(4)C) at the wobble position of elongator tRNA(Met), using acetate and ATP as substrates. First activates an acetate ion to form acetyladenylate (Ac-AMP) and then transfers the acetyl group to tRNA to form ac(4)C34. In Clostridium botulinum (strain Kyoto / Type A2), this protein is tRNA(Met) cytidine acetate ligase.